A 204-amino-acid chain; its full sequence is Transcriptional regulator GfcR 1 (204 aa).

This sequence belongs to the purine/pyrimidine phosphoribosyltransferase family. GfcR subfamily.

This Methanosarcina barkeri (strain Fusaro / DSM 804) protein is Transcriptional regulator GfcR 1.